A 303-amino-acid polypeptide reads, in one-letter code: Probable cell division protein WhiA (303 aa).

Residues 272 to 303 constitute a DNA-binding region (H-T-H motif); sequence SIQQLADSLSTPLTKSGVNHRLRKINKIADEL.

Belongs to the WhiA family.

Involved in cell division and chromosome segregation. In Streptococcus pneumoniae serotype 2 (strain D39 / NCTC 7466), this protein is Probable cell division protein WhiA.